Here is a 360-residue protein sequence, read N- to C-terminus: Photosystem II protein D1 3 (360 aa).

The next 3 membrane-spanning stretches (helical) occupy residues 29-46, 118-133, and 142-156; these read YVGWFGVLMIPTLLTATI, HFLLGIFSYMGREWEL, and WIAVAYSAPVAAATA. A chlorophyll a-binding site is contributed by His118. Position 126 (Tyr126) interacts with pheophytin a. Residues Asp170 and Glu189 each contribute to the [CaMn4O5] cluster site. Residues 197 to 218 traverse the membrane as a helical segment; it reads FHMLGVAGVFGGALFSAMHGSL. Residue His198 participates in chlorophyll a binding. Residues His215 and 264–265 each bind a quinone; that span reads SF. His215 contributes to the Fe cation binding site. His272 is a Fe cation binding site. Residues 274-288 traverse the membrane as a helical segment; sequence FLAAWPVIGIWFASL. Residues His332, Glu333, Asp342, and Ala344 each coordinate [CaMn4O5] cluster. Positions 345 to 360 are excised as a propeptide; sequence AGDQAPVALQAPAING.

The protein belongs to the reaction center PufL/M/PsbA/D family. PSII is composed of 1 copy each of membrane proteins PsbA, PsbB, PsbC, PsbD, PsbE, PsbF, PsbH, PsbI, PsbJ, PsbK, PsbL, PsbM, PsbT, PsbX, PsbY, PsbZ, Psb30/Ycf12, peripheral proteins PsbO, CyanoQ (PsbQ), PsbU, PsbV and a large number of cofactors. It forms dimeric complexes. Requires The D1/D2 heterodimer binds P680, chlorophylls that are the primary electron donor of PSII, and subsequent electron acceptors. It shares a non-heme iron and each subunit binds pheophytin, quinone, additional chlorophylls, carotenoids and lipids. D1 provides most of the ligands for the Mn4-Ca-O5 cluster of the oxygen-evolving complex (OEC). There is also a Cl(-1) ion associated with D1 and D2, which is required for oxygen evolution. The PSII complex binds additional chlorophylls, carotenoids and specific lipids. as cofactor. In terms of processing, tyr-161 forms a radical intermediate that is referred to as redox-active TyrZ, YZ or Y-Z. C-terminally processed by CtpA; processing is essential to allow assembly of the oxygen-evolving complex and thus photosynthetic growth.

It is found in the cellular thylakoid membrane. The catalysed reaction is 2 a plastoquinone + 4 hnu + 2 H2O = 2 a plastoquinol + O2. Its function is as follows. Photosystem II (PSII) is a light-driven water:plastoquinone oxidoreductase that uses light energy to abstract electrons from H(2)O, generating O(2) and a proton gradient subsequently used for ATP formation. It consists of a core antenna complex that captures photons, and an electron transfer chain that converts photonic excitation into a charge separation. The D1/D2 (PsbA/PsbD) reaction center heterodimer binds P680, the primary electron donor of PSII as well as several subsequent electron acceptors. The chain is Photosystem II protein D1 3 from Picosynechococcus sp. (strain ATCC 27264 / PCC 7002 / PR-6) (Agmenellum quadruplicatum).